Reading from the N-terminus, the 650-residue chain is XK-related protein 4 (650 aa).

The span at 1–15 (MAAKSDGRLKMKKSS) shows a compositional bias: basic and acidic residues. The tract at residues 1 to 44 (MAAKSDGRLKMKKSSDVAFTPLQNSDHSGSVQGLAPGLPSGSGA) is disordered. The span at 21 to 31 (PLQNSDHSGSV) shows a compositional bias: polar residues. Transmembrane regions (helical) follow at residues 114 to 134 (WILA…WLAV) and 144 to 164 (WFGL…VFSF). Serine 200 is subject to Phosphoserine. The interval 200–238 (SAAGEGEARPSTPQRQASNASKSNIAAANSGSNSSGATR) is disordered. Residues 216–238 (ASNASKSNIAAANSGSNSSGATR) are compositionally biased toward low complexity. The next 8 membrane-spanning stretches (helical) occupy residues 248-268 (CSFC…GQIW), 306-326 (HLLA…CIIV), 331-351 (LQAL…WALA), 365-385 (KPIS…TIAA), 396-418 (VFQL…WIVH), 428-448 (WEEI…WFNV), 457-477 (LFIY…LWYL), and 487-507 (FAIP…VFML).

It belongs to the XK family. Homodimer; homodimerization takes place upon caspase cleavage. Interacts with the processed C-terminus of XRCC4 (protein XRCC4, C-terminus); interaction promotes the phospholipid scramblase activity. Post-translationally, undergoes proteolytic processing by caspase-3 (CASP3), caspase-6 (CASP6) and caspase-7 (CASP7) to generate the XK-related protein 4, processed form, leading to its activation.

The protein resides in the cell membrane. The enzyme catalyses a 1,2-diacyl-sn-glycero-3-phospho-L-serine(in) = a 1,2-diacyl-sn-glycero-3-phospho-L-serine(out). Its activity is regulated as follows. Phospholipid scramblase activity is activated upon caspase cleavage to generate the XK-related protein 4, processed form. Does not act prior the onset of apoptosis. Homodimerizes upon caspase cleavage. Phospholipid scramblase activity is activated following interaction with the processed C-terminus of XRCC4 (protein XRCC4, C-terminus). In terms of biological role, phospholipid scramblase that promotes phosphatidylserine exposure on apoptotic cell surface. Phosphatidylserine is a specific marker only present at the surface of apoptotic cells and acts as a specific signal for engulfment. The polypeptide is XK-related protein 4 (Homo sapiens (Human)).